Consider the following 349-residue polypeptide: Glycerol-1-phosphate dehydrogenase [NAD(P)+] (349 aa).

Residues 95–99 (GKSID) and 117–120 (TSPS) each bind NAD(+). Asp-122 contributes to the substrate binding site. Ser-126 lines the NAD(+) pocket. Asp-169 is a binding site for substrate. Zn(2+)-binding residues include Asp-169 and His-249. His-253 is a binding site for substrate. His-265 is a binding site for Zn(2+).

The protein belongs to the glycerol-1-phosphate dehydrogenase family. Homodimer. Zn(2+) is required as a cofactor.

It is found in the cytoplasm. The enzyme catalyses sn-glycerol 1-phosphate + NAD(+) = dihydroxyacetone phosphate + NADH + H(+). It catalyses the reaction sn-glycerol 1-phosphate + NADP(+) = dihydroxyacetone phosphate + NADPH + H(+). The protein operates within membrane lipid metabolism; glycerophospholipid metabolism. Catalyzes the NAD(P)H-dependent reduction of dihydroxyacetonephosphate (DHAP or glycerone phosphate) to glycerol 1-phosphate (G1P). The G1P thus generated is used as the glycerophosphate backbone of phospholipids in the cellular membranes of Archaea. In Hyperthermus butylicus (strain DSM 5456 / JCM 9403 / PLM1-5), this protein is Glycerol-1-phosphate dehydrogenase [NAD(P)+].